The following is a 637-amino-acid chain: Chaperone protein HtpG (637 aa).

The a; substrate-binding stretch occupies residues 1-335 (MQGTVNSERL…SSDLPLNISR (335 aa)). Positions 336–559 (ETLQNNKIIE…DGSMDIRMER (224 aa)) are b. Residues 560–637 (FLREQKQLNY…RMNNVLSQIN (78 aa)) form a c region.

This sequence belongs to the heat shock protein 90 family. As to quaternary structure, homodimer.

The protein localises to the cytoplasm. Molecular chaperone. Has ATPase activity. The chain is Chaperone protein HtpG from Ehrlichia ruminantium (strain Welgevonden).